Reading from the N-terminus, the 341-residue chain is THO complex subunit 6 (341 aa).

WD repeat units lie at residues 22 to 61, 74 to 112, 124 to 165, 166 to 205, 215 to 254, 256 to 293, and 295 to 339; these read RLHM…SSEA, AHDG…GCKE, LEVP…RVLR, GHTD…EVQT, SRPH…PTTI, PIRA…KAQV, and GSSP…AFSL. Residue Ser-180 is modified to Phosphoserine.

It belongs to the WD repeat THOC6 family. In terms of assembly, component of the THO subcomplex, which is composed of THOC1, THOC2, THOC3, THOC5, THOC6 and THOC7. The THO subcomplex interacts with DDX39B to form the THO-DDX39B complex which multimerizes into a 28-subunit tetrameric assembly. Component of the transcription/export (TREX) complex at least composed of ALYREF/THOC4, DDX39B, SARNP/CIP29, CHTOP and the THO subcomplex; in the complex interacts with THOC5; together with THOC5 and THOC7, plays a key structural role in the oligomerization of the THO-DDX39B complex. TREX seems to have a dynamic structure involving ATP-dependent remodeling.

Its subcellular location is the nucleus. The protein resides in the nucleus speckle. Functionally, component of the THO subcomplex of the TREX complex which is thought to couple mRNA transcription, processing and nuclear export, and which specifically associates with spliced mRNA and not with unspliced pre-mRNA. Plays a key structural role in the oligomerization of the THO-DDX39B complex. TREX is recruited to spliced mRNAs by a transcription-independent mechanism, binds to mRNA upstream of the exon-junction complex (EJC) and is recruited in a splicing- and cap-dependent manner to a region near the 5' end of the mRNA where it functions in mRNA export to the cytoplasm via the TAP/NXF1 pathway. Plays a role in apoptosis negative control involved in brain development. In terms of biological role, (Microbial infection) The TREX complex is essential for the export of Kaposi's sarcoma-associated herpesvirus (KSHV) intronless mRNAs and infectious virus production. This Homo sapiens (Human) protein is THO complex subunit 6 (THOC6).